The primary structure comprises 107 residues: Nitrogenase-stabilizing/protective protein NifW (107 aa).

The protein belongs to the NifW family. As to quaternary structure, homotrimer; associates with NifD.

Functionally, may protect the nitrogenase Fe-Mo protein from oxidative damage. This chain is Nitrogenase-stabilizing/protective protein NifW, found in Gloeothece citriformis (strain PCC 7424) (Cyanothece sp. (strain PCC 7424)).